We begin with the raw amino-acid sequence, 331 residues long: Tetraacyldisaccharide 4'-kinase (331 aa).

57-64 (SVGGNGKT) lines the ATP pocket.

Belongs to the LpxK family.

The enzyme catalyses a lipid A disaccharide + ATP = a lipid IVA + ADP + H(+). The protein operates within glycolipid biosynthesis; lipid IV(A) biosynthesis; lipid IV(A) from (3R)-3-hydroxytetradecanoyl-[acyl-carrier-protein] and UDP-N-acetyl-alpha-D-glucosamine: step 6/6. Functionally, transfers the gamma-phosphate of ATP to the 4'-position of a tetraacyldisaccharide 1-phosphate intermediate (termed DS-1-P) to form tetraacyldisaccharide 1,4'-bis-phosphate (lipid IVA). This is Tetraacyldisaccharide 4'-kinase from Histophilus somni (strain 2336) (Haemophilus somnus).